Consider the following 839-residue polypeptide: Flocculation protein FLO11 (839 aa).

The first 22 residues, 1–22, serve as a signal peptide directing secretion; that stretch reads MVSLRSIFTSSILAAGLTRAHG. The region spanning 24–194 is the Flo11 1 domain; it reads SGKTCPTSEV…PKKCSSDCGV (171 aa). Cystine bridges form between Cys28/Cys188, Cys37/Cys167, Cys129/Cys192, and Cys143/Cys152. Asn79 carries N-linked (GlcNAc...) asparagine glycosylation. The tract at residues 187 to 342 is disordered; the sequence is KCSSDCGVEP…GPTCPTSEVS (156 aa). A compositionally biased stretch (acidic residues) spans 198–317; that stretch reads TSDEPEEPTT…EPTTSEEPEE (120 aa). In terms of domain architecture, Flo11 2 spans 332–502; it reads EGPTCPTSEV…PKKCSSNCGV (171 aa). N-linked (GlcNAc...) asparagine glycosylation is present at Asn387. A disordered region spans residues 496–606; it reads CSSNCGVEPT…LVPTTKTETD (111 aa). The span at 506–592 shows a compositional bias: acidic residues; sequence TSDEPEEPTT…PTTSDEEPGT (87 aa). A compositionally biased stretch (low complexity) spans 593 to 606; sequence TEEPLVPTTKTETD.

Belongs to the flocculin family. Highly divergent.

In terms of biological role, homophilic binding protein that enables kin discrimination in heterogeneous yeast populations by mediating homotypic cell-cell interactions during flocculation, a reversible and asexual process in which cells adhere to form aggregates (flocs). The polypeptide is Flocculation protein FLO11 (Komagataella phaffii (strain GS115 / ATCC 20864) (Yeast)).